The chain runs to 146 residues: Large ribosomal subunit protein uL16c (146 aa).

This sequence belongs to the universal ribosomal protein uL16 family. Part of the 50S ribosomal subunit.

The protein resides in the plastid. It localises to the chloroplast. This is Large ribosomal subunit protein uL16c from Angiopteris evecta (Mule's foot fern).